A 745-amino-acid chain; its full sequence is Protein transport protein SEC23 D (745 aa).

4 residues coordinate Zn(2+): C53, C56, C73, and C76. The tract at residues 53–76 (CENCYAYFNTYCELDQWAWNCSLC) is zinc finger-like.

This sequence belongs to the SEC23/SEC24 family. SEC24 subfamily. As to quaternary structure, component of the coat protein complex II (COPII), composed of at least five proteins: the Sec23/24 complex, the Sec13/31 complex and Sar1. As to expression, mostly expressed in closed floral bud, pollen and flowers, and, to a lower extent, in mature siliques, roots and leaf primordia.

It is found in the cytoplasmic vesicle. The protein localises to the COPII-coated vesicle membrane. It localises to the endoplasmic reticulum membrane. The protein resides in the membrane. Functionally, component of the coat protein complex II (COPII) which promotes the formation of transport vesicles from the endoplasmic reticulum (ER). The coat has two main functions, the physical deformation of the endoplasmic reticulum membrane into vesicles and the selection of cargo molecules. May contribute to COPII-coated vesicles formation and ER-Golgi vesicle transport. Together with SEC23A, essential for pollen wall development and exine patterning, probably by regulating endoplasmic reticulum (ER) export of lipids and proteins (e.g. sporopollenin) necessary for pollen wall formation. Also involved in plastid physiology in anther tapetal cells. The sequence is that of Protein transport protein SEC23 D from Arabidopsis thaliana (Mouse-ear cress).